The sequence spans 228 residues: Phosphatidylserine decarboxylase proenzyme (228 aa).

S197 functions as the Schiff-base intermediate with substrate; via pyruvic acid in the catalytic mechanism. S197 bears the Pyruvic acid (Ser); by autocatalysis mark.

This sequence belongs to the phosphatidylserine decarboxylase family. PSD-A subfamily. Heterodimer of a large membrane-associated beta subunit and a small pyruvoyl-containing alpha subunit. Pyruvate serves as cofactor. In terms of processing, is synthesized initially as an inactive proenzyme. Formation of the active enzyme involves a self-maturation process in which the active site pyruvoyl group is generated from an internal serine residue via an autocatalytic post-translational modification. Two non-identical subunits are generated from the proenzyme in this reaction, and the pyruvate is formed at the N-terminus of the alpha chain, which is derived from the carboxyl end of the proenzyme. The post-translation cleavage follows an unusual pathway, termed non-hydrolytic serinolysis, in which the side chain hydroxyl group of the serine supplies its oxygen atom to form the C-terminus of the beta chain, while the remainder of the serine residue undergoes an oxidative deamination to produce ammonia and the pyruvoyl prosthetic group on the alpha chain.

It is found in the cell membrane. The enzyme catalyses a 1,2-diacyl-sn-glycero-3-phospho-L-serine + H(+) = a 1,2-diacyl-sn-glycero-3-phosphoethanolamine + CO2. Its pathway is phospholipid metabolism; phosphatidylethanolamine biosynthesis; phosphatidylethanolamine from CDP-diacylglycerol: step 2/2. Catalyzes the formation of phosphatidylethanolamine (PtdEtn) from phosphatidylserine (PtdSer). The polypeptide is Phosphatidylserine decarboxylase proenzyme (Bacteroides fragilis (strain ATCC 25285 / DSM 2151 / CCUG 4856 / JCM 11019 / LMG 10263 / NCTC 9343 / Onslow / VPI 2553 / EN-2)).